Here is a 372-residue protein sequence, read N- to C-terminus: NAD(P)H-quinone oxidoreductase subunit 1 (372 aa).

Helical transmembrane passes span 27–47, 97–117, 128–148, 166–186, 204–224, 266–286, 308–328, and 347–367; these read LIWL…GVLV, LLFT…WLIV, VGVG…GLLM, AAQS…VVMM, ILSW…ICAL, VLSA…PVPV, ATGI…AILL, and FLLP…LAFP.

The protein belongs to the complex I subunit 1 family. In terms of assembly, NDH-1 is composed of at least 11 different subunits.

The protein localises to the cellular thylakoid membrane. It carries out the reaction a plastoquinone + NADH + (n+1) H(+)(in) = a plastoquinol + NAD(+) + n H(+)(out). The enzyme catalyses a plastoquinone + NADPH + (n+1) H(+)(in) = a plastoquinol + NADP(+) + n H(+)(out). Functionally, NDH-1 shuttles electrons from an unknown electron donor, via FMN and iron-sulfur (Fe-S) centers, to quinones in the respiratory and/or the photosynthetic chain. The immediate electron acceptor for the enzyme in this species is believed to be plastoquinone. Couples the redox reaction to proton translocation, and thus conserves the redox energy in a proton gradient. This is NAD(P)H-quinone oxidoreductase subunit 1 from Synechococcus sp. (strain WH7803).